We begin with the raw amino-acid sequence, 334 residues long: Glycerol-3-phosphate dehydrogenase [NAD(P)+] (334 aa).

The NADPH site is built by tryptophan 13, arginine 33, and lysine 106. Sn-glycerol 3-phosphate contacts are provided by lysine 106, glycine 137, and serine 139. An NADPH-binding site is contributed by alanine 141. Sn-glycerol 3-phosphate is bound by residues lysine 192, aspartate 245, serine 255, arginine 256, and asparagine 257. The active-site Proton acceptor is lysine 192. Arginine 256 contacts NADPH. NADPH contacts are provided by valine 280 and glutamate 282.

This sequence belongs to the NAD-dependent glycerol-3-phosphate dehydrogenase family.

The protein localises to the cytoplasm. It carries out the reaction sn-glycerol 3-phosphate + NAD(+) = dihydroxyacetone phosphate + NADH + H(+). The catalysed reaction is sn-glycerol 3-phosphate + NADP(+) = dihydroxyacetone phosphate + NADPH + H(+). It functions in the pathway membrane lipid metabolism; glycerophospholipid metabolism. Functionally, catalyzes the reduction of the glycolytic intermediate dihydroxyacetone phosphate (DHAP) to sn-glycerol 3-phosphate (G3P), the key precursor for phospholipid synthesis. The protein is Glycerol-3-phosphate dehydrogenase [NAD(P)+] of Chlamydia trachomatis serovar A (strain ATCC VR-571B / DSM 19440 / HAR-13).